Reading from the N-terminus, the 295-residue chain is Sulfotransferase 1A1 (295 aa).

Lysine 48–tryptophan 53 serves as a coordination point for 3'-phosphoadenylyl sulfate. Lysine 106 to histidine 108 provides a ligand contact to substrate. Catalysis depends on histidine 108, which acts as the Proton acceptor. Residues arginine 130, serine 138, tyrosine 193, threonine 227 to methionine 232, and phenylalanine 255 to glycine 259 contribute to the 3'-phosphoadenylyl sulfate site. Residue serine 138 is modified to Phosphoserine.

This sequence belongs to the sulfotransferase 1 family. Homodimer. In terms of tissue distribution, ubiquitously expressed in canine tissues with highest expression in male and female liver.

The protein resides in the cytoplasm. It carries out the reaction a phenol + 3'-phosphoadenylyl sulfate = an aryl sulfate + adenosine 3',5'-bisphosphate + H(+). It catalyses the reaction 17beta-estradiol + 3'-phosphoadenylyl sulfate = 17beta-estradiol 3-sulfate + adenosine 3',5'-bisphosphate + H(+). The catalysed reaction is 4-ethylphenol + 3'-phosphoadenylyl sulfate = 4-ethylphenyl sulfate + adenosine 3',5'-bisphosphate + H(+). The enzyme catalyses 4-nitrophenol + 3'-phosphoadenylyl sulfate = 4-nitrophenyl sulfate + adenosine 3',5'-bisphosphate. It carries out the reaction dopamine + 3'-phosphoadenylyl sulfate = dopamine 3-O-sulfate + adenosine 3',5'-bisphosphate + H(+). It catalyses the reaction dopamine + 3'-phosphoadenylyl sulfate = dopamine 4-O-sulfate + adenosine 3',5'-bisphosphate + H(+). The catalysed reaction is 3,3',5-triiodo-L-thyronine + 3'-phosphoadenylyl sulfate = 3,3',5-triiodo-L-thyronine sulfate + adenosine 3',5'-bisphosphate + H(+). The enzyme catalyses 3,3',5'-triiodo-L-thyronine + 3'-phosphoadenylyl sulfate = 3,3',5'-triiodo-L-thyronine sulfate + adenosine 3',5'-bisphosphate + H(+). It carries out the reaction 3,3'-diiodo-L-thyronine + 3'-phosphoadenylyl sulfate = 3,3'-diiodo-L-thyronine sulfate + adenosine 3',5'-bisphosphate + H(+). It catalyses the reaction L-thyroxine + 3'-phosphoadenylyl sulfate = L-thyroxine sulfate + adenosine 3',5'-bisphosphate + H(+). In terms of biological role, sulfotransferase that utilizes 3'-phospho-5'-adenylyl sulfate (PAPS) as sulfonate donor to catalyze the sulfate conjugation of a wide variety of acceptor molecules bearing a hydroxyl or an amine group. Sulfonation increases the water solubility of most compounds, and therefore their renal excretion, but it can also result in bioactivation to form active metabolites. Displays broad substrate specificity for small phenolic compounds. Plays an important role in the sulfonation of endogenous molecules such as steroid hormones. Mediates also the metabolic activation of carcinogenic N-hydroxyarylamines leading to highly reactive intermediates capable of forming DNA adducts, potentially resulting in mutagenesis. May play a role in gut microbiota-host metabolic interaction. O-sulfonates 4-ethylphenol (4-EP), a dietary tyrosine-derived metabolite produced by gut bacteria. The product 4-EPS crosses the blood-brain barrier and may negatively regulate oligodendrocyte maturation and myelination, affecting the functional connectivity of different brain regions associated with the limbic system. Catalyzes the sulfate conjugation of dopamine. Catalyzes the sulfation of T4 (L-thyroxine/3,5,3',5'-tetraiodothyronine), T3 (3,5,3'-triiodothyronine), rT3 (3,3',5'-triiodothyronine) and 3,3'-T2 (3,3'-diiodothyronine), with a substrate preference of 3,3'-T2 &gt; rT3 &gt; T3 &gt; T4. The sequence is that of Sulfotransferase 1A1 (SULT1A1) from Canis lupus familiaris (Dog).